Reading from the N-terminus, the 452-residue chain is MSPNSTLWQTILQDLEKLYNEETYNELFLPVTSTFKDQNGLLTMVVANEFLKNRINKLYIAKINELATKYSSTPVRLKFVSQEEVIEEPVADRKLTIDYRQGNLNSTYTFDSFVVGKSNMFAFRMAMKVADQPGAVANPFYIFGDVGLGKTHLMQAIGNYILDNDVEKRILYVKADNFIEDFVSLLSRNKNKTEEFNAKYKDIDVILVDDIQIMANASKTQMEFFKLFDYLYLNNKQIVITSDKPASQLTNIMPRLTTRFEAGLSVDIQIPELEHRISILKRKTATLDANLEVSEDILTFIASQFAANIREMEGALIRLISYAQTFNLEITMNVVEEALGAVLKTKKKTNDLNENNYDKIQSIVADYFQVSLPDLIGKKRHAKFTLPRHIAMYLIKLKYNIPYKTIGSLFNDRDHSTVLSACEKVERDMRMDSNLKFAVDSIVKKIDSPLLK.

The interval 1–73 is domain I, interacts with DnaA modulators; sequence MSPNSTLWQT…NELATKYSST (73 aa). The segment at 73–102 is domain II; that stretch reads TPVRLKFVSQEEVIEEPVADRKLTIDYRQG. The domain III, AAA+ region stretch occupies residues 103–323; sequence NLNSTYTFDS…GALIRLISYA (221 aa). ATP-binding residues include glycine 147, glycine 149, lysine 150, and threonine 151. The tract at residues 324-452 is domain IV, binds dsDNA; that stretch reads QTFNLEITMN…VKKIDSPLLK (129 aa).

This sequence belongs to the DnaA family. In terms of assembly, oligomerizes as a right-handed, spiral filament on DNA at oriC.

The protein resides in the cytoplasm. Functionally, plays an essential role in the initiation and regulation of chromosomal replication. ATP-DnaA binds to the origin of replication (oriC) to initiate formation of the DNA replication initiation complex once per cell cycle. Binds the DnaA box (a 9 base pair repeat at the origin) and separates the double-stranded (ds)DNA. Forms a right-handed helical filament on oriC DNA; dsDNA binds to the exterior of the filament while single-stranded (ss)DNA is stabiized in the filament's interior. The ATP-DnaA-oriC complex binds and stabilizes one strand of the AT-rich DNA unwinding element (DUE), permitting loading of DNA polymerase. After initiation quickly degrades to an ADP-DnaA complex that is not apt for DNA replication. Binds acidic phospholipids. This Acholeplasma laidlawii (strain PG-8A) protein is Chromosomal replication initiator protein DnaA.